We begin with the raw amino-acid sequence, 451 residues long: Probable V-type proton ATPase subunit H 1 (451 aa).

The protein belongs to the V-ATPase H subunit family. As to quaternary structure, V-ATPase is a heteromultimeric enzyme made up of two complexes: the ATP-hydrolytic V1 complex and the proton translocation V0 complex. The V1 complex consists of three catalytic AB heterodimers that form a heterohexamer, three peripheral stalks each consisting of EG heterodimers, one central rotor including subunits D and F, and the regulatory subunits C and H. The proton translocation complex V0 consists of the proton transport subunit a, a ring of proteolipid subunits c9c'', rotary subunit d, subunits e and f, and the accessory subunits vah-19/Ac45 and vah-20/PRR.

Its function is as follows. Subunit of the V1 complex of vacuolar(H+)-ATPase (V-ATPase), a multisubunit enzyme composed of a peripheral complex (V1) that hydrolyzes ATP and a membrane integral complex (V0) that translocates protons. V-ATPase is responsible for acidifying and maintaining the pH of intracellular compartments and in some cell types, is targeted to the plasma membrane, where it is responsible for acidifying the extracellular environment. Subunit H is essential for V-ATPase activity, but not for the assembly of the complex. The chain is Probable V-type proton ATPase subunit H 1 from Caenorhabditis elegans.